The sequence spans 390 residues: Pyruvate dehydrogenase E1 component subunit alpha, somatic form, mitochondrial (390 aa).

The N-terminal 29 residues, Met1–Asn29, are a transit peptide targeting the mitochondrion. At Lys63 the chain carries N6-acetyllysine; alternate. Lys63 carries the post-translational modification N6-succinyllysine; alternate. Residues His92, Tyr118, Arg119, Ala157, Gly165, Val167, Asp196, Gly197, Ala198, Asn225, and Tyr227 each contribute to the pyruvate site. The thiamine diphosphate site is built by Tyr118 and Arg119. Residues Gly165, Val167, Asp196, Gly197, Ala198, and Asn225 each contribute to the thiamine diphosphate site. Residue Asp196 coordinates Mg(2+). 2 residues coordinate Mg(2+): Asn225 and Tyr227. Ser232 carries the post-translational modification Phosphoserine; by PDK1. An N6-acetyllysine; alternate modification is found at Lys244. N6-succinyllysine; alternate is present on Lys244. An N6-succinyllysine modification is found at Lys277. Position 292 (His292) interacts with thiamine diphosphate. Ser293 carries the phosphoserine; by PDK1, PDK2, PDK3 and PDK4 modification. Ser295 is subject to Phosphoserine. Ser300 carries the phosphoserine; by PDK1, PDK2, PDK3 and PDK4 modification. Tyr301 bears the Phosphotyrosine mark. The residue at position 313 (Lys313) is an N6-acetyllysine; alternate. Lys313 is subject to N6-succinyllysine; alternate. Residues Lys321 and Lys336 each carry the N6-acetyllysine modification. Lys385 bears the N6-succinyllysine mark.

Heterotetramer of two PDHA1 and two PDHB subunits. The heterotetramer interacts with DLAT, and is part of the multimeric pyruvate dehydrogenase complex that contains multiple copies of pyruvate dehydrogenase (E1), dihydrolipoamide acetyltransferase (DLAT, E2) and lipoamide dehydrogenase (DLD, E3). These subunits are bound to an inner core composed of about 48 DLAT and 12 PDHX molecules. It depends on thiamine diphosphate as a cofactor. The cofactor is Mg(2+). In terms of processing, phosphorylation at Ser-232, Ser-293 and Ser-300 by PDK family kinases inactivates the enzyme; for this phosphorylation at a single site is sufficient. Dephosphorylation at all three sites, i.e. at Ser-232, Ser-293 and Ser-300, is required for reactivation. Acetylation alters the phosphorylation pattern. Deacetylated by SIRT3. In terms of tissue distribution, ubiquitous.

Its subcellular location is the mitochondrion matrix. The catalysed reaction is N(6)-[(R)-lipoyl]-L-lysyl-[protein] + pyruvate + H(+) = N(6)-[(R)-S(8)-acetyldihydrolipoyl]-L-lysyl-[protein] + CO2. Its activity is regulated as follows. Pyruvate dehydrogenase activity is inhibited by phosphorylation of PDHA1; it is reactivated by dephosphorylation. Its function is as follows. The pyruvate dehydrogenase complex catalyzes the overall conversion of pyruvate to acetyl-CoA and CO(2), and thereby links the glycolytic pathway to the tricarboxylic cycle. This is Pyruvate dehydrogenase E1 component subunit alpha, somatic form, mitochondrial (PDHA1) from Homo sapiens (Human).